The primary structure comprises 111 residues: Large ribosomal subunit protein uL22 (111 aa).

Belongs to the universal ribosomal protein uL22 family. Part of the 50S ribosomal subunit.

This protein binds specifically to 23S rRNA; its binding is stimulated by other ribosomal proteins, e.g. L4, L17, and L20. It is important during the early stages of 50S assembly. It makes multiple contacts with different domains of the 23S rRNA in the assembled 50S subunit and ribosome. Functionally, the globular domain of the protein is located near the polypeptide exit tunnel on the outside of the subunit, while an extended beta-hairpin is found that lines the wall of the exit tunnel in the center of the 70S ribosome. The polypeptide is Large ribosomal subunit protein uL22 (Geotalea daltonii (strain DSM 22248 / JCM 15807 / FRC-32) (Geobacter daltonii)).